The primary structure comprises 514 residues: Type-2 serine--tRNA ligase (514 aa).

Ala313 serves as a coordination point for L-serine. Residue Cys315 coordinates Zn(2+). Arg344 is an L-serine binding site. ATP is bound by residues 344-346 (RWE) and 355-356 (RV). Position 361 to 363 (361 to 363 (RGE)) interacts with L-serine. Positions 363 and 470 each coordinate Zn(2+). An ATP-binding site is contributed by Arg477.

Belongs to the class-II aminoacyl-tRNA synthetase family. Type-2 seryl-tRNA synthetase subfamily. As to quaternary structure, homodimer. It depends on Zn(2+) as a cofactor.

It localises to the cytoplasm. The catalysed reaction is tRNA(Ser) + L-serine + ATP = L-seryl-tRNA(Ser) + AMP + diphosphate + H(+). The enzyme catalyses tRNA(Sec) + L-serine + ATP = L-seryl-tRNA(Sec) + AMP + diphosphate + H(+). It functions in the pathway aminoacyl-tRNA biosynthesis; selenocysteinyl-tRNA(Sec) biosynthesis; L-seryl-tRNA(Sec) from L-serine and tRNA(Sec): step 1/1. Catalyzes the attachment of serine to tRNA(Ser). Is also able to aminoacylate tRNA(Sec) with serine, to form the misacylated tRNA L-seryl-tRNA(Sec), which will be further converted into selenocysteinyl-tRNA(Sec). This chain is Type-2 serine--tRNA ligase, found in Methanococcus maripaludis (strain C5 / ATCC BAA-1333).